A 166-amino-acid polypeptide reads, in one-letter code: MRCPFCHFVETDVIDTRKLYEGEVIRRRRRCRACGRRFTTYERIESVSLMVVKKDGTREPYDREKIARGVRTACYRRPVSAAAIEQLVNDVETAIMNTDEHEISSQAIGDAVMQRLRDLDEVAYIRFASVYRAFTDIGKLREAVDELLDREGVRNGHLSPKPAEDS.

Residues 3–34 fold into a zinc finger; it reads CPFCHFVETDVIDTRKLYEGEVIRRRRRCRAC. In terms of domain architecture, ATP-cone spans 49–139; sequence LMVVKKDGTR…VYRAFTDIGK (91 aa).

Belongs to the NrdR family. It depends on Zn(2+) as a cofactor.

Functionally, negatively regulates transcription of bacterial ribonucleotide reductase nrd genes and operons by binding to NrdR-boxes. This is Transcriptional repressor NrdR from Chloroflexus aurantiacus (strain ATCC 29364 / DSM 637 / Y-400-fl).